Reading from the N-terminus, the 407-residue chain is MKRVVITGLGIISSIGNNKIEVLTSLLETKSGISFSKEMERSGMRSHVWGNIKLDNYQENIDRKIFRFMNDASIYSYLSMKQAIEDAKLTSKMYQNNPRVGVIIGSSSGSPRCQINGVSIIKKTKRLKSVSPYTVIKSMTSSISACLSTLFKIQGVNYSISSACATSAHCIGNAMELIQLGKQDLIFAGGGEELSWELACAFDSMGALSTMYNSQPILSSRVFDYYRDGFVISGGAGILVVEELNYALSRSAHIYAEIVGYGTSSDGYNVVVPSGNGAMRCMNIAMSNIQEPIDYLNVHSTSTKIGDLIELNAIQQVFRKTSIPILSSTKSITGHSLGASGVQEMIYSLLMLKYNFIVPSINIFKLDPKAKNCNILTTMMRKELSIIMSNSFGFGGTNVSLIIKKFV.

One can recognise a Ketosynthase family 3 (KS3) domain in the interval 1–405 (MKRVVITGLG…GTNVSLIIKK (405 aa)). Catalysis depends on for beta-ketoacyl synthase activity residues C164, H299, and H335.

It belongs to the thiolase-like superfamily. Beta-ketoacyl-ACP synthases family. In terms of assembly, homodimer.

It localises to the cytoplasm. The enzyme catalyses a fatty acyl-[ACP] + malonyl-[ACP] + H(+) = a 3-oxoacyl-[ACP] + holo-[ACP] + CO2. It catalyses the reaction (3Z)-decenoyl-[ACP] + malonyl-[ACP] + H(+) = 3-oxo-(5Z)-dodecenoyl-[ACP] + holo-[ACP] + CO2. The protein operates within lipid metabolism; fatty acid biosynthesis. Its function is as follows. Involved in the type II fatty acid elongation cycle. Catalyzes the elongation of a wide range of acyl-ACP by the addition of two carbons from malonyl-ACP to an acyl acceptor. Can also use unsaturated fatty acids. Catalyzes a key reaction in unsaturated fatty acid (UFA) synthesis, the elongation of the cis-3-decenoyl-ACP produced by FabA. This chain is 3-oxoacyl-[acyl-carrier-protein] synthase 1 (fabB), found in Buchnera aphidicola subsp. Baizongia pistaciae (strain Bp).